We begin with the raw amino-acid sequence, 174 residues long: Small hydrophobic protein (174 aa).

Residues 33 to 53 (VAVICAILALIFLVATIGLSV) form a helical membrane-spanning segment. An N-linked (GlcNAc...) asparagine; by host glycan is attached at Asn-165.

It is found in the membrane. In Meleagris gallopavo (Wild turkey), this protein is Small hydrophobic protein (SH).